Consider the following 559-residue polypeptide: 3-phosphoinositide-dependent protein kinase 1 (559 aa).

At tyrosine 9 the chain carries Phosphotyrosine; by SRC and INSR. Serine 25 carries the phosphoserine modification. Residues 25–83 are disordered; the sequence is SPSMVRSQTEPSSSPGIPSGVSRQGSTMDGTTAEARPSTNPLQQHPAQLPPQPRKKRPE. Positions 35 to 46 are enriched in low complexity; the sequence is PSSSPGIPSGVS. One can recognise a Protein kinase domain in the interval 85 to 345; the sequence is FKFGKILGEG…YGPLKAHPFF (261 aa). ATP contacts are provided by residues 95-97 and lysine 114; that span reads SFS. Positions 116–160 are PIF-pocket; the sequence is LEKRHIIKENKVPYVTRERDVMSRLDHPFFVKLYFTFQDDEKLYF. Residues 163-165 and glutamate 169 contribute to the ATP site; that span reads SYA. Aspartate 208 (proton acceptor) is an active-site residue. The ATP site is built by glutamate 212 and aspartate 226. Residue serine 244 is modified to Phosphoserine. Lysine 307 bears the N6-acetyllysine mark. Residue threonine 357 is modified to Phosphothreonine; by MELK. Tyrosine 376 and tyrosine 379 each carry phosphotyrosine; by SRC and INSR. Serine 396 bears the Phosphoserine mark. Serine 397 is subject to Phosphoserine; by MAP3K5. Serine 399 is subject to Phosphoserine. Phosphoserine; by MAP3K5 is present on serine 401. Serine 413 carries the post-translational modification Phosphoserine. Residues 462–553 enclose the PH domain; that stretch reads KMGPVDKRKG…EVWRQQYQSS (92 aa). Phosphoserine; by PKC/PRKCQ is present on serine 504. Position 516 is a phosphothreonine; by autocatalysis (threonine 516). A Phosphoserine; by PKC/PRKCQ modification is found at serine 532.

Belongs to the protein kinase superfamily. AGC Ser/Thr protein kinase family. PDPK1 subfamily. As to quaternary structure, homodimer in its autoinhibited state. Active as monomer. Interacts with NPRL2, PPARG, PAK1, PTK2B, GRB14, PKN1 (via C-terminus), STRAP and IKKB. The Tyr-9 phosphorylated form interacts with SRC, RASA1 and CRK (via their SH2 domains). Interacts with SGK3 in a phosphorylation-dependent manner. The tyrosine-phosphorylated form interacts with PTPN6. The Ser-244 phosphorylated form interacts with YWHAH and YWHAQ. Binds INSR in response to insulin. Interacts (via PH domain) with SMAD3, SMAD4 and SMAD7. Interacts with PKN2; the interaction stimulates PDPK1 autophosphorylation, its PI(3,4,5)P3-dependent kinase activity toward 'Ser-473' of AKT1 but also activates its kinase activity toward PRKCD and PRKCZ. In terms of processing, phosphorylation on Ser-244 in the activation loop is required for full activity. PDPK1 itself can autophosphorylate Ser-244, leading to its own activation. Autophosphorylation is inhibited by the apoptotic C-terminus cleavage product of PKN2. Tyr-9 phosphorylation is critical for stabilization of both PDPK1 and the PDPK1/SRC complex via HSP90-mediated protection of PDPK1 degradation. Angiotensin II stimulates the tyrosine phosphorylation of PDPK1 in vascular smooth muscle in a calcium- and SRC-dependent manner. Phosphorylated on Tyr-9, Tyr-376 and Tyr-379 by INSR in response to insulin. Palmitate negatively regulates autophosphorylation at Ser-244 and palmitate-induced phosphorylation at Ser-532 and Ser-504 by PKC/PRKCQ negatively regulates its ability to phosphorylate PKB/AKT1. Phosphorylation at Thr-357 by MELK partially inhibits kinase activity, the inhibition is cooperatively enhanced by phosphorylation at Ser-397 and Ser-401 by MAP3K5. Monoubiquitinated in the kinase domain, deubiquitinated by USP4.

The protein localises to the cytoplasm. It is found in the nucleus. Its subcellular location is the cell membrane. It localises to the cell junction. The protein resides in the focal adhesion. It catalyses the reaction L-seryl-[protein] + ATP = O-phospho-L-seryl-[protein] + ADP + H(+). The enzyme catalyses L-threonyl-[protein] + ATP = O-phospho-L-threonyl-[protein] + ADP + H(+). Its activity is regulated as follows. Homodimerization regulates its activity by maintaining the kinase in an autoinhibitory conformation. NPRL2 down-regulates its activity by interfering with tyrosine phosphorylation at the Tyr-9, Tyr-376 and Tyr-379 residues. The 14-3-3 protein YWHAQ acts as a negative regulator by association with the residues surrounding the Ser-244 residue. STRAP positively regulates its activity by enhancing its autophosphorylation and by stimulating its dissociation from YWHAQ. SMAD2, SMAD3, SMAD4 and SMAD7 also positively regulate its activity by stimulating its dissociation from YWHAQ. Activated by phosphorylation on Tyr-9, Tyr-376 and Tyr-379 by INSR in response to insulin. In terms of biological role, serine/threonine kinase which acts as a master kinase, phosphorylating and activating a subgroup of the AGC family of protein kinases. Its targets include: protein kinase B (PKB/AKT1, PKB/AKT2, PKB/AKT3), p70 ribosomal protein S6 kinase (RPS6KB1), p90 ribosomal protein S6 kinase (RPS6KA1, RPS6KA2 and RPS6KA3), cyclic AMP-dependent protein kinase (PRKACA), protein kinase C (PRKCD and PRKCZ), serum and glucocorticoid-inducible kinase (SGK1, SGK2 and SGK3), p21-activated kinase-1 (PAK1), TSSK3, protein kinase PKN (PKN1 and PKN2). Plays a central role in the transduction of signals from insulin by providing the activating phosphorylation to PKB/AKT1, thus propagating the signal to downstream targets controlling cell proliferation and survival, as well as glucose and amino acid uptake and storage. Negatively regulates the TGF-beta-induced signaling by: modulating the association of SMAD3 and SMAD7 with TGF-beta receptor, phosphorylating SMAD2, SMAD3, SMAD4 and SMAD7, preventing the nuclear translocation of SMAD3 and SMAD4 and the translocation of SMAD7 from the nucleus to the cytoplasm in response to TGF-beta. Activates PPARG transcriptional activity and promotes adipocyte differentiation. Activates the NF-kappa-B pathway via phosphorylation of IKKB. The tyrosine phosphorylated form is crucial for the regulation of focal adhesions by angiotensin II. Controls proliferation, survival, and growth of developing pancreatic cells. Participates in the regulation of Ca(2+) entry and Ca(2+)-activated K(+) channels of mast cells. Essential for the motility of vascular endothelial cells (ECs) and is involved in the regulation of their chemotaxis. Plays a critical role in cardiac homeostasis by serving as a dual effector for cell survival and beta-adrenergic response. Plays an important role during thymocyte development by regulating the expression of key nutrient receptors on the surface of pre-T cells and mediating Notch-induced cell growth and proliferative responses. Provides negative feedback inhibition to toll-like receptor-mediated NF-kappa-B activation in macrophages. The polypeptide is 3-phosphoinositide-dependent protein kinase 1 (Pdpk1) (Rattus norvegicus (Rat)).